Consider the following 115-residue polypeptide: Large ribosomal subunit protein uL18 (115 aa).

Belongs to the universal ribosomal protein uL18 family. In terms of assembly, part of the 50S ribosomal subunit; part of the 5S rRNA/L5/L18/L25 subcomplex. Contacts the 5S and 23S rRNAs.

In terms of biological role, this is one of the proteins that bind and probably mediate the attachment of the 5S RNA into the large ribosomal subunit, where it forms part of the central protuberance. This chain is Large ribosomal subunit protein uL18, found in Rickettsia rickettsii (strain Iowa).